The sequence spans 271 residues: uncharacterized protein (271 aa).

This is an uncharacterized protein from Acanthamoeba polyphaga mimivirus (APMV).